A 521-amino-acid polypeptide reads, in one-letter code: Cytochrome P450 52A9 (521 aa).

Position 468 (C468) interacts with heme.

The protein belongs to the cytochrome P450 family. Heme serves as cofactor.

The protein resides in the membrane. Its function is as follows. Together with an NADPH cytochrome P450 the enzyme system catalyzes the terminal hydroxylation as the first step in the assimilation of alkanes and fatty acids. The protein is Cytochrome P450 52A9 (CYP52A9) of Candida maltosa (Yeast).